The following is a 150-amino-acid chain: Dynein light chain Tctex-type protein 2B (150 aa).

It belongs to the dynein light chain Tctex-type family.

It is found in the dynein axonemal particle. Functionally, acts as one of several non-catalytic accessory components of the cytoplasmic dynein 2 complex (dynein-2 complex), a motor protein complex that drives the movement of cargos along microtubules within cilia and flagella in concert with the intraflagellar transport (IFT) system. Required for proper retrograde ciliary transport. This is Dynein light chain Tctex-type protein 2B (dynlt2b) from Danio rerio (Zebrafish).